The primary structure comprises 415 residues: uncharacterized protein (415 aa).

The [4Fe-4S] cluster site is built by cysteine 276 and cysteine 316.

In terms of assembly, homodimer. The cofactor is [4Fe-4S] cluster.

This is an uncharacterized protein from Methanocaldococcus jannaschii (strain ATCC 43067 / DSM 2661 / JAL-1 / JCM 10045 / NBRC 100440) (Methanococcus jannaschii).